The primary structure comprises 240 residues: Putative exosome complex component RRP41 (240 aa).

It belongs to the RNase PH family. As to quaternary structure, component of the RNA exosome complex.

Its subcellular location is the cytoplasm. It is found in the nucleus. The protein localises to the nucleolus. The protein resides in the nucleoplasm. Functionally, non-catalytic component of the RNA exosome complex which has 3'-&gt;5' exoribonuclease activity and participates in a multitude of cellular RNA processing and degradation events. The sequence is that of Putative exosome complex component RRP41 (exos-4.1) from Caenorhabditis briggsae.